Here is a 178-residue protein sequence, read N- to C-terminus: Probable chorismate pyruvate-lyase (178 aa).

Substrate is bound by residues Arg-73, Leu-111, and Glu-163.

The protein belongs to the UbiC family.

It localises to the cytoplasm. It carries out the reaction chorismate = 4-hydroxybenzoate + pyruvate. Its pathway is cofactor biosynthesis; ubiquinone biosynthesis. In terms of biological role, removes the pyruvyl group from chorismate, with concomitant aromatization of the ring, to provide 4-hydroxybenzoate (4HB) for the ubiquinone pathway. The chain is Probable chorismate pyruvate-lyase from Pseudomonas aeruginosa (strain ATCC 15692 / DSM 22644 / CIP 104116 / JCM 14847 / LMG 12228 / 1C / PRS 101 / PAO1).